The sequence spans 470 residues: Glutamyl-tRNA(Gln) amidotransferase subunit A (470 aa).

Catalysis depends on charge relay system residues Lys71 and Ser146. Ser170 functions as the Acyl-ester intermediate in the catalytic mechanism.

It belongs to the amidase family. GatA subfamily. Heterotrimer of A, B and C subunits.

The enzyme catalyses L-glutamyl-tRNA(Gln) + L-glutamine + ATP + H2O = L-glutaminyl-tRNA(Gln) + L-glutamate + ADP + phosphate + H(+). In terms of biological role, allows the formation of correctly charged Gln-tRNA(Gln) through the transamidation of misacylated Glu-tRNA(Gln) in organisms which lack glutaminyl-tRNA synthetase. The reaction takes place in the presence of glutamine and ATP through an activated gamma-phospho-Glu-tRNA(Gln). The protein is Glutamyl-tRNA(Gln) amidotransferase subunit A of Akkermansia muciniphila (strain ATCC BAA-835 / DSM 22959 / JCM 33894 / BCRC 81048 / CCUG 64013 / CIP 107961 / Muc).